We begin with the raw amino-acid sequence, 75 residues long: Putative sulfur carrier protein YrkI (75 aa).

Cys14 acts as the Cysteine persulfide intermediate in catalysis.

The protein belongs to the sulfur carrier protein TusA family.

The polypeptide is Putative sulfur carrier protein YrkI (yrkI) (Bacillus subtilis (strain 168)).